A 248-amino-acid polypeptide reads, in one-letter code: tRNA (guanine-N(1)-)-methyltransferase (248 aa).

S-adenosyl-L-methionine contacts are provided by residues glycine 113 and 133–138 (IGDYVL).

The protein belongs to the RNA methyltransferase TrmD family. In terms of assembly, homodimer.

It is found in the cytoplasm. It carries out the reaction guanosine(37) in tRNA + S-adenosyl-L-methionine = N(1)-methylguanosine(37) in tRNA + S-adenosyl-L-homocysteine + H(+). Functionally, specifically methylates guanosine-37 in various tRNAs. This is tRNA (guanine-N(1)-)-methyltransferase from Shewanella halifaxensis (strain HAW-EB4).